The chain runs to 340 residues: MSAPIIAIDAMGGDFGPRNIVQASLACLTATPSLHLALVGQASLIEELVSAHEAVDRSRLRVIHASEAIAMDERPSQALRGKPDSSMRVALELVASGQAQACVSAGNTGALMALSRFVLKTLPGIDRPAMIAAIPTRSGHCQLLDLGANVDCSAEALYQFAVMGSVLAEILGVATPRVALLNVGTEDIKGNQQVKRAAGLLQAASGLNYIGYVEGDGLYRGEADVVVCDGFVGNVLLKSSEGLATMIAARIETLFQRNLLSRAVGALALPLLKRLQTDLAPARHNGASLLGLQGVVVKSHGSASVSGFQSAIQRAVVESRENLPQRLKGRLETMFQDGRT.

This sequence belongs to the PlsX family. Homodimer. Probably interacts with PlsY.

It localises to the cytoplasm. The enzyme catalyses a fatty acyl-[ACP] + phosphate = an acyl phosphate + holo-[ACP]. It participates in lipid metabolism; phospholipid metabolism. In terms of biological role, catalyzes the reversible formation of acyl-phosphate (acyl-PO(4)) from acyl-[acyl-carrier-protein] (acyl-ACP). This enzyme utilizes acyl-ACP as fatty acyl donor, but not acyl-CoA. The sequence is that of Phosphate acyltransferase from Pseudomonas syringae pv. syringae (strain B728a).